A 752-amino-acid polypeptide reads, in one-letter code: Catalase-peroxidase 1 (752 aa).

The segment at 1–45 is disordered; sequence MPPNTPDASDARPPQADTETHSHSESENPVIESPKPKAHAPLTNQ. Positions 116–244 form a cross-link, tryptophyl-tyrosyl-methioninium (Trp-Tyr) (with M-270); that stretch reads WHAAGTYRIF…YGATTMGLIY (129 aa). Catalysis depends on H117, which acts as the Proton acceptor. Residues 244 to 270 constitute a cross-link (tryptophyl-tyrosyl-methioninium (Tyr-Met) (with W-116)); it reads YVNPEGPEGKPDPLAAAHDIRETFGRM. Position 285 (H285) interacts with heme b.

The protein belongs to the peroxidase family. Peroxidase/catalase subfamily. As to quaternary structure, homodimer or homotetramer. Heme b is required as a cofactor. Formation of the three residue Trp-Tyr-Met cross-link is important for the catalase, but not the peroxidase activity of the enzyme.

The catalysed reaction is H2O2 + AH2 = A + 2 H2O. The enzyme catalyses 2 H2O2 = O2 + 2 H2O. In terms of biological role, bifunctional enzyme with both catalase and broad-spectrum peroxidase activity. May play a role in the intracellular survival of mycobacteria. In Mycolicibacterium fortuitum (Mycobacterium fortuitum), this protein is Catalase-peroxidase 1.